Consider the following 396-residue polypeptide: Adenosine deaminase 1 (396 aa).

The segment at 1–26 (MTSRSTEKSAAANPAAVSKTPSPDRI) is disordered. H35 and H37 together coordinate Zn(2+). Residues H37, D39, and G197 each coordinate substrate. Position 224 (H224) interacts with Zn(2+). E227 (proton donor) is an active-site residue. Residue D316 coordinates Zn(2+).

It belongs to the metallo-dependent hydrolases superfamily. Adenosine and AMP deaminases family. Adenosine deaminase subfamily. As to quaternary structure, homotetramer. The cofactor is Zn(2+).

It catalyses the reaction adenosine + H2O + H(+) = inosine + NH4(+). The enzyme catalyses 2'-deoxyadenosine + H2O + H(+) = 2'-deoxyinosine + NH4(+). Its activity is regulated as follows. Coformycin and 2'-deoxycoformycin, whose structures mimic the transition state of the deamination reaction, are potent competitive inhibitors. Functionally, catalyzes the hydrolytic deamination of adenosine and 2-deoxyadenosine. The sequence is that of Adenosine deaminase 1 from Streptomyces coelicolor (strain ATCC BAA-471 / A3(2) / M145).